Consider the following 560-residue polypeptide: uncharacterized protein (560 aa).

The zn(2)-C6 fungal-type DNA-binding region spans 18–44 (CLRCRRRKVKCDRQYPCSRCKESEESC). A disordered region spans residues 60–80 (LSRPITRETDSSAHQETRTRL). The segment covering 64-80 (ITRETDSSAHQETRTRL) has biased composition (basic and acidic residues). A helical membrane pass occupies residues 182-202 (FATSIILIVTAIAVALSLESF).

The protein resides in the nucleus membrane. This is an uncharacterized protein from Schizosaccharomyces pombe (strain 972 / ATCC 24843) (Fission yeast).